The following is a 2324-amino-acid chain: Acetyl-CoA carboxylase (2324 aa).

Position 1 is an N-acetylmethionine (Met-1). The interval Met-1–Ser-34 is disordered. A phosphoserine mark is found at Ser-78 and Ser-80. A Biotin carboxylation domain is found at Val-117–Ala-618. Residues Gln-275 to Met-466 form the ATP-grasp domain. Position 315–320 (Gly-315–Gly-320) interacts with ATP. 3 residues coordinate Mn(2+): Glu-424, Glu-437, and Asn-439. Residue Arg-441 is part of the active site. One can recognise a Biotinyl-binding domain in the interval Phe-745–Gln-819. At Lys-786 the chain carries N6-biotinyllysine. Ser-1193 is modified (phosphoserine). Positions Pro-1553–Lys-1891 constitute a CoA carboxyltransferase N-terminal domain. A carboxyltransferase region spans residues Pro-1553–Asp-2211. Residues Arg-1800, Lys-2104, and Arg-2106 each coordinate CoA. The CoA carboxyltransferase C-terminal domain maps to Pro-1895–Asp-2211.

Biotin serves as cofactor. Mn(2+) is required as a cofactor.

The protein localises to the cytoplasm. It catalyses the reaction hydrogencarbonate + acetyl-CoA + ATP = malonyl-CoA + ADP + phosphate + H(+). The catalysed reaction is N(6)-biotinyl-L-lysyl-[protein] + hydrogencarbonate + ATP = N(6)-carboxybiotinyl-L-lysyl-[protein] + ADP + phosphate + H(+). Its pathway is lipid metabolism; malonyl-CoA biosynthesis; malonyl-CoA from acetyl-CoA: step 1/1. With respect to regulation, by phosphorylation. Catalyzes the rate-limiting reaction in the biogenesis of long-chain fatty acids. Carries out three functions: biotin carboxyl carrier protein, biotin carboxylase and carboxyltransferase. In Gallus gallus (Chicken), this protein is Acetyl-CoA carboxylase (ACAC).